The primary structure comprises 192 residues: Imidazole glycerol phosphate synthase subunit HisH (192 aa).

One can recognise a Glutamine amidotransferase type-1 domain in the interval 3–192 (TVALIDYGSG…LVANFLTWRV (190 aa)). Residues His-172 and Glu-174 contribute to the active site.

As to quaternary structure, heterodimer of HisH and HisF.

It is found in the cytoplasm. The catalysed reaction is 5-[(5-phospho-1-deoxy-D-ribulos-1-ylimino)methylamino]-1-(5-phospho-beta-D-ribosyl)imidazole-4-carboxamide + L-glutamine = D-erythro-1-(imidazol-4-yl)glycerol 3-phosphate + 5-amino-1-(5-phospho-beta-D-ribosyl)imidazole-4-carboxamide + L-glutamate + H(+). The enzyme catalyses L-glutamine + H2O = L-glutamate + NH4(+). Its pathway is amino-acid biosynthesis; L-histidine biosynthesis; L-histidine from 5-phospho-alpha-D-ribose 1-diphosphate: step 5/9. IGPS catalyzes the conversion of PRFAR and glutamine to IGP, AICAR and glutamate. The HisH subunit catalyzes the hydrolysis of glutamine to glutamate and ammonia as part of the synthesis of IGP and AICAR. The resulting ammonia molecule is channeled to the active site of HisF. In Azospirillum brasilense, this protein is Imidazole glycerol phosphate synthase subunit HisH (hisH).